The sequence spans 513 residues: MGPTKYIIIAVVIIIICVILGLYVVDKKAKEKLSEASKEARRLKEEAERDAEAKKKEAILEAKEESHKLRAEVERENRERRNEVQRLERRIIQKEEALDKKSEALENKEEALNKKQQKIEDVETHMEELHEKQRTELERISGLTTEQAKEFLLEQVRKEVKHETAVMIKEIETKAKEEADKRAREVITYAIQRCAADHVAETTVHVVNLPNDEMKGRIIGREGRNIRTLETLTGVDLIIDDTPEAVILSGFDPIRREVARIALEKLIVDGRIHPARIEEMVEKAKKEVEVSIKEEGEQATFETGIHGLHIELIRLLGRLKYRTSYGQNVLKHSIEVSHLAGLMASELGIDPTLAKRVGLLHDIGKAVDHEVEGPHAIIGSEIAKKYRESALVVNAIGAHHGDMEPQSLEAILVQAADAISAARPGARRETLEAYIKRLEKLEEIANECEGVEKSYAIQAGREIRIMVKPEVLDDTGCIEMARNIVKQIESELEYPGQIKVNVIRETRAIEYAK.

Residues 6 to 26 form a helical membrane-spanning segment; the sequence is YIIIAVVIIIICVILGLYVVD. Residues 35–59 are disordered; the sequence is EASKEARRLKEEAERDAEAKKKEAI. One can recognise a KH domain in the interval 203–288; it reads TVHVVNLPND…EMVEKAKKEV (86 aa). One can recognise an HD domain in the interval 329-422; that stretch reads VLKHSIEVSH…VQAADAISAA (94 aa).

Belongs to the RNase Y family.

The protein localises to the cell membrane. Its function is as follows. Endoribonuclease that initiates mRNA decay. The polypeptide is Ribonuclease Y (Clostridium botulinum (strain Okra / Type B1)).